The following is a 96-amino-acid chain: Large ribosomal subunit protein uL23 (96 aa).

Belongs to the universal ribosomal protein uL23 family. Part of the 50S ribosomal subunit. Contacts protein L29, and trigger factor when it is bound to the ribosome.

One of the early assembly proteins it binds 23S rRNA. One of the proteins that surrounds the polypeptide exit tunnel on the outside of the ribosome. Forms the main docking site for trigger factor binding to the ribosome. This is Large ribosomal subunit protein uL23 from Halalkalibacterium halodurans (strain ATCC BAA-125 / DSM 18197 / FERM 7344 / JCM 9153 / C-125) (Bacillus halodurans).